Here is a 493-residue protein sequence, read N- to C-terminus: Chitobiosyldiphosphodolichol beta-mannosyltransferase (493 aa).

The Lumenal segment spans residues 1–71 (MNRVAVVVLG…PISMSNSFKK (71 aa)). Residues 72–92 (IPLISIFMWPLLAICKVLFQI) form a helical membrane-spanning segment. Topologically, residues 93–109 (IQLMYVLLVKVPSPLNT) are cytoplasmic. Residues 110 to 130 (ILVQSPPAIPTIFVMQIVCWI) constitute an intramembrane region (helical). The Cytoplasmic portion of the chain corresponds to 131 to 493 (RGVHLVIDWH…SSSNSKSKKD (363 aa)). The tract at residues 462–493 (FIPSSSSSSSSSSSSSSSSSSSSSSNSKSKKD) is disordered. The segment covering 465–493 (SSSSSSSSSSSSSSSSSSSSSSNSKSKKD) has biased composition (low complexity).

It belongs to the glycosyltransferase group 1 family. Glycosyltransferase 33 subfamily.

It localises to the endoplasmic reticulum membrane. It carries out the reaction an N,N'-diacetylchitobiosyl-diphospho-di-trans,poly-cis-dolichol + GDP-alpha-D-mannose = a beta-D-Man-(1-&gt;4)-beta-D-GlcNAc-(1-&gt;4)-alpha-D-GlcNAc-diphospho-di-trans,poly-cis-dolichol + GDP + H(+). The protein operates within protein modification; protein glycosylation. Participates in the formation of the lipid-linked precursor oligosaccharide for N-glycosylation. Involved in assembling the dolichol-pyrophosphate-GlcNAc(2)-Man(5) intermediate on the cytoplasmic surface of the ER. The polypeptide is Chitobiosyldiphosphodolichol beta-mannosyltransferase (alg1) (Dictyostelium discoideum (Social amoeba)).